The primary structure comprises 152 residues: uncharacterized protein (152 aa).

This is an uncharacterized protein from Mycobacterium tuberculosis (strain ATCC 25618 / H37Rv).